Here is a 197-residue protein sequence, read N- to C-terminus: FMN-dependent NADH:quinone oxidoreductase (197 aa).

Residues Ser-10, 16–18 (SQS), 93–96 (MYNF), and 137–140 (TRGG) contribute to the FMN site.

It belongs to the azoreductase type 1 family. Homodimer. The cofactor is FMN.

It catalyses the reaction 2 a quinone + NADH + H(+) = 2 a 1,4-benzosemiquinone + NAD(+). The catalysed reaction is N,N-dimethyl-1,4-phenylenediamine + anthranilate + 2 NAD(+) = 2-(4-dimethylaminophenyl)diazenylbenzoate + 2 NADH + 2 H(+). Functionally, quinone reductase that provides resistance to thiol-specific stress caused by electrophilic quinones. In terms of biological role, also exhibits azoreductase activity. Catalyzes the reductive cleavage of the azo bond in aromatic azo compounds to the corresponding amines. The sequence is that of FMN-dependent NADH:quinone oxidoreductase from Shewanella frigidimarina (strain NCIMB 400).